The sequence spans 297 residues: tRNA (guanine-N(7)-)-methyltransferase (297 aa).

S-adenosyl-L-methionine-binding positions include glycine 101, 124–125, 171–172, and cysteine 191; these read EI and NT. Aspartate 194 is a catalytic residue. 270–272 serves as a coordination point for S-adenosyl-L-methionine; the sequence is TEE.

This sequence belongs to the class I-like SAM-binding methyltransferase superfamily. TrmB family. Forms a complex with trm82.

It localises to the nucleus. The enzyme catalyses guanosine(46) in tRNA + S-adenosyl-L-methionine = N(7)-methylguanosine(46) in tRNA + S-adenosyl-L-homocysteine. It functions in the pathway tRNA modification; N(7)-methylguanine-tRNA biosynthesis. Catalyzes the formation of N(7)-methylguanine at position 46 (m7G46) in tRNA. In Aspergillus niger (strain ATCC MYA-4892 / CBS 513.88 / FGSC A1513), this protein is tRNA (guanine-N(7)-)-methyltransferase (trm8).